The primary structure comprises 215 residues: Cytochrome b6 (215 aa).

Residues 32–52 (IFYCLGGITLTCFLVQVATGF) traverse the membrane as a helical segment. Residue cysteine 35 coordinates heme c. Residues histidine 86 and histidine 100 each contribute to the heme b site. Transmembrane regions (helical) follow at residues 90–110 (ASMM…TGGF), 116–136 (LTWV…VTGY), and 186–206 (LHTF…FPMI). Positions 187 and 202 each coordinate heme b.

It belongs to the cytochrome b family. PetB subfamily. The 4 large subunits of the cytochrome b6-f complex are cytochrome b6, subunit IV (17 kDa polypeptide, PetD), cytochrome f and the Rieske protein, while the 4 small subunits are PetG, PetL, PetM and PetN. The complex functions as a dimer. Heme b serves as cofactor. Heme c is required as a cofactor.

It is found in the plastid. Its subcellular location is the chloroplast thylakoid membrane. Functionally, component of the cytochrome b6-f complex, which mediates electron transfer between photosystem II (PSII) and photosystem I (PSI), cyclic electron flow around PSI, and state transitions. The chain is Cytochrome b6 from Jasminum nudiflorum (Winter jasmine).